Here is a 146-residue protein sequence, read N- to C-terminus: Large ribosomal subunit protein uL13 (146 aa).

It belongs to the universal ribosomal protein uL13 family. As to quaternary structure, part of the 50S ribosomal subunit.

Functionally, this protein is one of the early assembly proteins of the 50S ribosomal subunit, although it is not seen to bind rRNA by itself. It is important during the early stages of 50S assembly. The protein is Large ribosomal subunit protein uL13 of Mycoplasma genitalium (strain ATCC 33530 / DSM 19775 / NCTC 10195 / G37) (Mycoplasmoides genitalium).